The sequence spans 122 residues: Large ribosomal subunit protein bL12 (122 aa).

This sequence belongs to the bacterial ribosomal protein bL12 family. In terms of assembly, homodimer. Part of the ribosomal stalk of the 50S ribosomal subunit. Forms a multimeric L10(L12)X complex, where L10 forms an elongated spine to which 2 to 4 L12 dimers bind in a sequential fashion. Binds GTP-bound translation factors.

Its function is as follows. Forms part of the ribosomal stalk which helps the ribosome interact with GTP-bound translation factors. Is thus essential for accurate translation. This chain is Large ribosomal subunit protein bL12, found in Pasteurella multocida (strain Pm70).